Here is a 555-residue protein sequence, read N- to C-terminus: MDIKRTILWVIFSMSLVLLYDNWQRSQGHASMFFPSTTQQAASAPAASGAAAQGDVPKANVAPGAAGTAAPAAPQAAAQPTGEKVVVTTDTVRAEIDTAGGIVSRLELLKEHEKDGKPVVLFERDNVRTYMARSGLIGGDLPNHTTVFTAAPGPRTLDGAEQLEVALTAEKNGVKLVKTYVFRKGSYVVDTKFAVTNAGAAPVSPTLYLELARDGSKVEQSQFYSTFTGPAVYTDADKYHKIDFEDIAKGKATVPAAANNGWVAMVQHYFASAWIPQTGKEHSFYVQQIDPHLYRVGVQQPLGELAPGATVTTDARLFAGPQEEHMLEKIAPGLELVKDYGWLTILAKPLFWLLEKLHGFLGNWGWSIIALTVLIKLVFFPLSAASYKSMGKMKDLQPRMTSIRERYKNDPQKMNQEMMGLYKTEKVNPLGGCLPIVIQIPVFIALYWVLLSSVEMRGAPWLGWIHDLSVPDPFYILPIVMAVSMFVQTKLNPTPPDPVQAKVMMIMPLVFSVMFFFFPAGLVLYWVVNNILSIAQQWQINRMLGKGKAAVVAKS.

The helical transmembrane segment at 7 to 24 (ILWVIFSMSLVLLYDNWQ) threads the bilayer. The segment at 62–81 (APGAAGTAAPAAPQAAAQPT) is disordered. 5 consecutive transmembrane segments (helical) span residues 334–354 (LELVKDYGWLTILAKPLFWLL), 360–380 (FLGNWGWSIIALTVLIKLVFF), 430–450 (LGGCLPIVIQIPVFIALYWVL), 468–488 (LSVPDPFYILPIVMAVSMFVQ), and 503–523 (VMMIMPLVFSVMFFFFPAGLV).

Belongs to the OXA1/ALB3/YidC family. Type 1 subfamily. In terms of assembly, interacts with the Sec translocase complex via SecD. Specifically interacts with transmembrane segments of nascent integral membrane proteins during membrane integration.

It is found in the cell inner membrane. Required for the insertion and/or proper folding and/or complex formation of integral membrane proteins into the membrane. Involved in integration of membrane proteins that insert both dependently and independently of the Sec translocase complex, as well as at least some lipoproteins. Aids folding of multispanning membrane proteins. This Cupriavidus necator (strain ATCC 17699 / DSM 428 / KCTC 22496 / NCIMB 10442 / H16 / Stanier 337) (Ralstonia eutropha) protein is Membrane protein insertase YidC.